The following is a 312-amino-acid chain: MEKKKMGLLVMAYGTPYKEEDIERYYTHIRRGRKPEPEMLQDLKDRYKAIGGISPLSKITEQQAHGLCEHLNDIQDDIEFHVYIGLKHIEPFIEDAVADMHKDGITEAVSIVLAPHFSTFSVKSYNKRAQDEADKLGNLQITSVESWYDEPKFVDYWVKQVKDTYASMSQEERDSAVLIVSAHSLPEKIIAAGDPYPDQLAQSAKMIAEGAGIEHYEIGWQSEGNTPDPWLGPDVQDLTRDLFEQKGYQTFVYVPVGFVADHLEVLYDNDYECKVVTDEIGAAYYRPEMPNAKPAFIDALATVVLKKLDESK.

Residues tyrosine 13, arginine 30, 46-47 (RY), serine 54, and tyrosine 125 each bind Fe-coproporphyrin III. Histidine 183 and glutamate 264 together coordinate Fe(2+).

Belongs to the ferrochelatase family.

It is found in the cytoplasm. It catalyses the reaction Fe-coproporphyrin III + 2 H(+) = coproporphyrin III + Fe(2+). It participates in porphyrin-containing compound metabolism; protoheme biosynthesis. Its function is as follows. Involved in coproporphyrin-dependent heme b biosynthesis. Catalyzes the insertion of ferrous iron into coproporphyrin III to form Fe-coproporphyrin III. This chain is Coproporphyrin III ferrochelatase, found in Bacillus pumilus (strain SAFR-032).